The sequence spans 225 residues: Probable septum site-determining protein MinC (225 aa).

It belongs to the MinC family. In terms of assembly, interacts with MinD and FtsZ.

Functionally, cell division inhibitor that blocks the formation of polar Z ring septums. Rapidly oscillates between the poles of the cell to destabilize FtsZ filaments that have formed before they mature into polar Z rings. Prevents FtsZ polymerization. The chain is Probable septum site-determining protein MinC from Listeria welshimeri serovar 6b (strain ATCC 35897 / DSM 20650 / CCUG 15529 / CIP 8149 / NCTC 11857 / SLCC 5334 / V8).